We begin with the raw amino-acid sequence, 233 residues long: Probable GTP-binding protein EngB (233 aa).

An EngB-type G domain is found at 31-205; the sequence is TGVEIAFAGR…RRKLDTWFGP (175 aa). GTP is bound by residues 39–46, 66–70, 84–87, 151–154, and 184–186; these read GRSNAGKS, GRTQL, DLPG, TKAD, and FSS. Mg(2+) is bound by residues S46 and T68.

It belongs to the TRAFAC class TrmE-Era-EngA-EngB-Septin-like GTPase superfamily. EngB GTPase family. Mg(2+) is required as a cofactor.

Necessary for normal cell division and for the maintenance of normal septation. The sequence is that of Probable GTP-binding protein EngB from Photobacterium profundum (strain SS9).